Reading from the N-terminus, the 488-residue chain is Bifunctional protein HldE (488 aa).

The interval M1–L331 is ribokinase. Residue N206–E209 coordinates ATP. D276 is a catalytic residue. A cytidylyltransferase region spans residues F358–N488.

In the N-terminal section; belongs to the carbohydrate kinase PfkB family. The protein in the C-terminal section; belongs to the cytidylyltransferase family. In terms of assembly, homodimer.

The enzyme catalyses D-glycero-beta-D-manno-heptose 7-phosphate + ATP = D-glycero-beta-D-manno-heptose 1,7-bisphosphate + ADP + H(+). It catalyses the reaction D-glycero-beta-D-manno-heptose 1-phosphate + ATP + H(+) = ADP-D-glycero-beta-D-manno-heptose + diphosphate. Its pathway is nucleotide-sugar biosynthesis; ADP-L-glycero-beta-D-manno-heptose biosynthesis; ADP-L-glycero-beta-D-manno-heptose from D-glycero-beta-D-manno-heptose 7-phosphate: step 1/4. It participates in nucleotide-sugar biosynthesis; ADP-L-glycero-beta-D-manno-heptose biosynthesis; ADP-L-glycero-beta-D-manno-heptose from D-glycero-beta-D-manno-heptose 7-phosphate: step 3/4. In terms of biological role, catalyzes the phosphorylation of D-glycero-D-manno-heptose 7-phosphate at the C-1 position to selectively form D-glycero-beta-D-manno-heptose-1,7-bisphosphate. Its function is as follows. Catalyzes the ADP transfer from ATP to D-glycero-beta-D-manno-heptose 1-phosphate, yielding ADP-D-glycero-beta-D-manno-heptose. The polypeptide is Bifunctional protein HldE (Paramagnetospirillum magneticum (strain ATCC 700264 / AMB-1) (Magnetospirillum magneticum)).